A 698-amino-acid polypeptide reads, in one-letter code: Probable Xaa-Pro aminopeptidase P (698 aa).

Residues Asp-509, Asp-520, Glu-604, and Glu-618 each contribute to the Mn(2+) site.

The protein belongs to the peptidase M24B family. Mn(2+) is required as a cofactor.

It carries out the reaction Release of any N-terminal amino acid, including proline, that is linked to proline, even from a dipeptide or tripeptide.. Its function is as follows. Catalyzes the removal of a penultimate prolyl residue from the N-termini of peptides. This is Probable Xaa-Pro aminopeptidase P (AMPP) from Trichophyton verrucosum (strain HKI 0517).